The chain runs to 135 residues: uncharacterized protein (135 aa).

A coiled-coil region spans residues Asp68–Leu135. Residues Glu88–Leu135 are disordered. The span at Asp102 to Lys117 shows a compositional bias: acidic residues. Positions Ser118–Ser129 are enriched in basic and acidic residues.

This is an uncharacterized protein from Acidianus hospitalis (AFV-1).